We begin with the raw amino-acid sequence, 418 residues long: MNVKEKYELAKKEYEKWGIDVDKVLDELNKVKISIHCWQGDDVKGFEVVQNELSGGIQCNGNYPGAARNAEELRKDLDKALSLIPGKHKVNLHAIYLETNGEFVDRDEIKPEHFANWVKWAKENGLGLDFNPTIFSHPKSADGLTLSHPDKEIRDFWIRHSIASRKIGEYFGKELGQTCLTNIWIPDGYKDIPSDRLGPRRRLKESLDEIFKVQIDKKYNLDCVESKVFGIGAEAYTVGSNEFYLNYAAKNNIMSLMDTGHYHPTEVVSDKLSAMLLFDEKVALHVSRPVRWDSDHVVVYDDELKEIAKEIVRNDALDRVIIGLDFFDASINRIAAWTIGSRNMIKALLNAMLTPNDKLRELQEEGNFTERLALMEEFKTYPMGDIWNYYCEKNNVPVGESWIKEVKEYEKDVLSKRN.

Positions 261, 293, and 295 each coordinate Mn(2+).

It belongs to the rhamnose isomerase family. Mn(2+) serves as cofactor.

It is found in the cytoplasm. The enzyme catalyses L-rhamnopyranose = L-rhamnulose. The protein operates within carbohydrate degradation; L-rhamnose degradation; glycerone phosphate from L-rhamnose: step 1/3. Its function is as follows. Catalyzes the interconversion of L-rhamnose and L-rhamnulose. The polypeptide is L-rhamnose isomerase (Clostridium beijerinckii (strain ATCC 51743 / NCIMB 8052) (Clostridium acetobutylicum)).